The chain runs to 1222 residues: ATP-dependent helicase/nuclease subunit A (1222 aa).

The 457-residue stretch at 39–495 folds into the UvrD-like helicase ATP-binding domain; sequence QKRTAQQIEA…ILLKENFRSQ (457 aa). 60 to 67 provides a ligand contact to ATP; sequence ASAGSGKT. In terms of domain architecture, UvrD-like helicase C-terminal spans 524–810; that stretch reads QLIAGSHAQT…NLMTIHKSKG (287 aa).

The protein belongs to the helicase family. AddA subfamily. In terms of assembly, heterodimer of AddA and AddB/RexB. Requires Mg(2+) as cofactor.

It catalyses the reaction Couples ATP hydrolysis with the unwinding of duplex DNA by translocating in the 3'-5' direction.. The enzyme catalyses ATP + H2O = ADP + phosphate + H(+). In terms of biological role, the heterodimer acts as both an ATP-dependent DNA helicase and an ATP-dependent, dual-direction single-stranded exonuclease. Recognizes the chi site generating a DNA molecule suitable for the initiation of homologous recombination. The AddA nuclease domain is required for chi fragment generation; this subunit has the helicase and 3' -&gt; 5' nuclease activities. The polypeptide is ATP-dependent helicase/nuclease subunit A (Streptococcus pyogenes serotype M12 (strain MGAS9429)).